The primary structure comprises 136 residues: Histone H2B (136 aa).

Residues 1–10 (MPPKAADKKP) show a composition bias toward basic and acidic residues. Positions 1-44 (MPPKAADKKPAAKAPVASKAPEKKDAGKKTASTGEKKKRTKARR) are disordered. An N6-acetyllysine; alternate mark is found at lysine 8 and lysine 9. Glycyl lysine isopeptide (Lys-Gly) (interchain with G-Cter in SUMO); alternate cross-links involve residues lysine 8 and lysine 9. Residue lysine 13 is modified to N6-acetyllysine. An N6-acetyllysine; alternate modification is found at lysine 23. Lysine 23 participates in a covalent cross-link: Glycyl lysine isopeptide (Lys-Gly) (interchain with G-Cter in SUMO); alternate. Lysine 24 is covalently cross-linked (Glycyl lysine isopeptide (Lys-Gly) (interchain with G-Cter in SUMO)). Lysine 130 participates in a covalent cross-link: Glycyl lysine isopeptide (Lys-Gly) (interchain with G-Cter in ubiquitin).

The protein belongs to the histone H2B family. In terms of assembly, the nucleosome is a histone octamer containing two molecules each of H2A, H2B, H3 and H4 assembled in one H3-H4 heterotetramer and two H2A-H2B heterodimers. The octamer wraps approximately 147 bp of DNA. Post-translationally, monoubiquitinated to form H2BK123ub1. H2BK123ub1 gives a specific tag for epigenetic transcriptional activation and is also prerequisite for H3K4me and H3K79me formation. H2BK123ub1 also modulates the formation of double-strand breaks during meiosis and is a prerequisite for DNA-damage checkpoint activation. In terms of processing, acetylated by GCN5 to form H2BK11ac and H2BK16ac. H2BK16ac can also be formed by ESA1. Acetylation of N-terminal lysines and particularly formation of H2BK11acK16ac has a positive effect on transcription. Sumoylation to form H2BK6su or H2BK7su, and probably also H2BK16su or H2BK17su, occurs preferentially near the telomeres and represses gene transcription.

It is found in the nucleus. The protein resides in the chromosome. Core component of nucleosome. Nucleosomes wrap and compact DNA into chromatin, limiting DNA accessibility to the cellular machineries which require DNA as a template. Histones thereby play a central role in transcription regulation, DNA repair, DNA replication and chromosomal stability. DNA accessibility is regulated via a complex set of post-translational modifications of histones, also called histone code, and nucleosome remodeling. The chain is Histone H2B (hh2b) from Rosellinia necatrix (White root-rot fungus).